Reading from the N-terminus, the 84-residue chain is Gomesin (84 aa).

Residues 1 to 23 (MNRTRLFACLLLAVLILVHESNA) form the signal peptide. The residue at position 24 (Q24) is a Pyrrolidone carboxylic acid. 2 disulfides stabilise this stretch: C25-C38 and C29-C34. R41 is subject to Arginine amide. Residues 42 to 84 (GKRSLDETNVGTSDVEKRAFDDSNVPSLVEERELEDEGSFIFD) constitute a propeptide that is removed on maturation.

As to expression, in hemocytes only, but not in all hemocytes observed.

The protein resides in the secreted. Functionally, active against several Gram-positive bacteria such as Bacillus spp, Staphylococcus spp and E.faecalis, several Gram-negative bacteria such as E.coli, K.pneumoniae, P.aeruginosa and Salmonella spp, filamentous fungi such as N.crassa, T.viridae and yeasts such as C.albicans. It is active against the parasite L.amazonensis as well. It shows hemolytic activity. The chain is Gomesin from Acanthoscurria gomesiana (Tarantula spider).